We begin with the raw amino-acid sequence, 944 residues long: Leucine--tRNA ligase 2 (944 aa).

Positions 36 to 46 (PYPNSPWHIGH) match the 'HIGH' region motif. Residues 623–627 (KMSKS) carry the 'KMSKS' region motif. Lys626 contacts ATP.

This sequence belongs to the class-I aminoacyl-tRNA synthetase family.

The protein resides in the cytoplasm. The enzyme catalyses tRNA(Leu) + L-leucine + ATP = L-leucyl-tRNA(Leu) + AMP + diphosphate. This Saccharolobus solfataricus (strain ATCC 35092 / DSM 1617 / JCM 11322 / P2) (Sulfolobus solfataricus) protein is Leucine--tRNA ligase 2.